Consider the following 310-residue polypeptide: tRNA dimethylallyltransferase (310 aa).

Residue 5–12 coordinates ATP; that stretch reads GPTASGKS. 7 to 12 lines the substrate pocket; the sequence is TASGKS. An interaction with substrate tRNA region spans residues 30-33; that stretch reads DSMQ.

It belongs to the IPP transferase family. As to quaternary structure, monomer. Requires Mg(2+) as cofactor.

It carries out the reaction adenosine(37) in tRNA + dimethylallyl diphosphate = N(6)-dimethylallyladenosine(37) in tRNA + diphosphate. Functionally, catalyzes the transfer of a dimethylallyl group onto the adenine at position 37 in tRNAs that read codons beginning with uridine, leading to the formation of N6-(dimethylallyl)adenosine (i(6)A). The polypeptide is tRNA dimethylallyltransferase (Rhodopseudomonas palustris (strain HaA2)).